We begin with the raw amino-acid sequence, 316 residues long: C1GALT1-specific chaperone 1 (316 aa).

Over 1 to 6 (MLSESS) the chain is Cytoplasmic. The chain crosses the membrane as a helical; Signal-anchor for type II membrane protein span at residues 7–26 (SFLKGVMLGSIFCALITMLG). Residues 27–316 (HIRIGNRMHH…FLPPNGSEND (290 aa)) lie on the Lumenal side of the membrane.

This sequence belongs to the glycosyltransferase 31 family. Beta3-Gal-T subfamily. Associates with core 1 beta-3-galactosyltransferase (C1GALT1), probably not with the soluble active form.

It is found in the membrane. Its function is as follows. Probable chaperone required for the generation of 1 O-glycan Gal-beta1-3GalNAc-alpha1-Ser/Thr (T antigen), which is a precursor for many extended O-glycans in glycoproteins. Probably acts as a specific molecular chaperone assisting the folding/stability of core 1 beta-3-galactosyltransferase (C1GALT1). The sequence is that of C1GALT1-specific chaperone 1 (C1galt1c1) from Rattus norvegicus (Rat).